The following is a 72-amino-acid chain: High-potential iron-sulfur protein isozyme 1 (72 aa).

Ala-1 carries the N-carbamoylalanine; partial modification. 4 residues coordinate [4Fe-4S] cluster: Cys-34, Cys-37, Cys-51, and Cys-65.

It belongs to the high-potential iron-sulfur protein (HiPIP) family. As to quaternary structure, homodimer.

In terms of biological role, specific class of high-redox-potential 4Fe-4S ferredoxins. Functions in anaerobic electron transport in most purple and in some other photosynthetic bacteria and in at least one genus (Paracoccus) of halophilic, denitrifying bacteria. The sequence is that of High-potential iron-sulfur protein isozyme 1 from Ectothiorhodospira mobilis.